We begin with the raw amino-acid sequence, 789 residues long: MYDDGPRKGKPGGLSMDAATAAGLAAVWPEYFPEESEFAADGRSARLAADLVDLFSSPDASDLLSRVEDDGDILSLPVDFQQLSNLTWITEALQENPKEALLSMGAAVHLIVCASRDLQLGDINKINIRLYNHTKTIALKNLKAAYIKKLVTVRGTVLKVSTVKPLVLQLNFQCMKCATKFPRVFCDGKFSPPVSCSIQGCKSRTFIPMRSTAKLMDFQKIRIQELASGESHEEGRVPRTIECELTEDLVDCCIPGETVTVTGIVKVLNNYMDVGGGKSKSRNQGLYYLYLEAISVRNSKVHAASGNSDAASGSFGFQAFTEKDLEFISKFKEEHGADVFRQILHSFCPSIYGHELVKAGITLALFGGVQKHSIDQNKVPVRGDIHAVVVGDPGLGKSQLLQAAAAVSPRGIYVCGNTTTNAGLTVAVVKDSMSNDYAFEAGAMVLADRGICCIDEFDKMSAEHQALLEAMEQQCVSVAKAGLVASLSARTSVLAAANPVGGHYDRAKTVNENLKMSAALLSRFDLVFILLDKPDELLDKRVSDHIIALHSNDGGPFTANKRIRTVPQFNPSTEFGVGRTSLASRLRLHPEKDKDFCPLPGPLLRKYISYARSHVNPRIFMPSPAADSLQKFYLDLRKQSDSADGTPITARQLESLVRLAEARARVDLREEVTLEDAKEVIDIMTESLYDKCVDEHGVVDFARSGGMSNQKQSKKFLRALNEQCDLQKKDCFTMNEMYNLADRISLQVANLDAIVESLNNAGYITKKGSSMYQVVTSSYQGSQATWSGR.

The C4-type zinc finger occupies cysteine 174–cysteine 201. One can recognise an MCM domain in the interval valine 339–isoleucine 546. Glycine 391–serine 398 is an ATP binding site. The Arginine finger signature appears at serine 522 to aspartate 525.

Belongs to the MCM family.

It localises to the nucleus. It carries out the reaction ATP + H2O = ADP + phosphate + H(+). Its function is as follows. Probable DNA helicase that may play a role in DNA repair durin meiosis. This is Probable DNA helicase MCM8 (MCM8) from Oryza sativa subsp. indica (Rice).